A 233-amino-acid chain; its full sequence is MGQKVHPNGIRLGIVKPWNATWFANTKDFADNLDGDFKVRQFLTKELSKASLSRIVIERPAKSIRVTIHTARPGVVIGKKGEDVEKLRTAVAKIAGVPAQINIAEVRKPELDAQLVGDSIASQLERRVMFRRAMKRAVQNAMRLGAKGIKVEVSGRLGGAEIARSEWYREGRVPLHTLRADIDYATSSAHTTYGVIGIKVWIFKGEILGGMPAATEAAEPKADKPKKQRKGRK.

The 69-residue stretch at V39–R107 folds into the KH type-2 domain.

This sequence belongs to the universal ribosomal protein uS3 family. Part of the 30S ribosomal subunit. Forms a tight complex with proteins S10 and S14.

Functionally, binds the lower part of the 30S subunit head. Binds mRNA in the 70S ribosome, positioning it for translation. This Vibrio vulnificus (strain CMCP6) protein is Small ribosomal subunit protein uS3.